The following is a 389-amino-acid chain: MSESVGCCDSVSQCFFDYYTSKILIIRSKKVGTLNRFTQALVIAYVIGYVCVYNKGYQDTDTVLSSVTTKVKGIALTNTSELGERIWDVADYIIPPQEDGSFFVLTNMIITTNQTQSKCAENPTPASTCTSHRDCKRGFNDARGDGVRTGRCVSYSASVKTCEVLSWCPLEKIVDPPNPPLLADAENFTVLIKNNIRYPKFNFNKRNILPNINSSYLTHCVFSRKTDPDCPIFRLGDIVGEAEEDFQIMAVHGGVMGVQIRWDCDLDMPQSWCVPRYTFRRLDNKDPDNNVAPGYNFRFAKYYKNSDGTETRTLIKGYGIRFDVMVFGQAGKFNIIPTLLNMGAGLALLGLVNVICDWIVLTFMKRKQHYKEQKYTYVDDFGLLHNEDK.

Topologically, residues 1–36 (MSESVGCCDSVSQCFFDYYTSKILIIRSKKVGTLNR) are cytoplasmic. A helical membrane pass occupies residues 37 to 57 (FTQALVIAYVIGYVCVYNKGY). Topologically, residues 58-343 (QDTDTVLSSV…NIIPTLLNMG (286 aa)) are extracellular. Residues Lys-70 and Lys-72 each coordinate ATP. CTP-binding residues include Lys-70 and Lys-72. N-linked (GlcNAc...) asparagine glycosylation is found at Asn-78 and Asn-113. Intrachain disulfides connect Cys-119/Cys-168, Cys-129/Cys-152, and Cys-135/Cys-162. Arg-143 is a CTP binding site. The N-linked (GlcNAc...) asparagine glycan is linked to Asn-187. ATP contacts are provided by Thr-189 and Leu-191. Thr-189 is a CTP binding site. An N-linked (GlcNAc...) asparagine glycan is attached at Asn-213. Cystine bridges form between Cys-220-Cys-230 and Cys-264-Cys-273. ATP is bound by residues Asn-296, Arg-298, and Lys-316. Asn-296, Arg-298, and Lys-316 together coordinate CTP. A helical membrane pass occupies residues 344 to 364 (AGLALLGLVNVICDWIVLTFM). Residues 365–389 (KRKQHYKEQKYTYVDDFGLLHNEDK) are Cytoplasmic-facing.

This sequence belongs to the P2X receptor family. In terms of assembly, functional P2XRs are organized as homomeric and heteromeric trimers. Forms homotrimer.

The protein localises to the cell membrane. Its subcellular location is the lysosome membrane. The enzyme catalyses K(+)(in) = K(+)(out). It carries out the reaction Na(+)(in) = Na(+)(out). It catalyses the reaction Ca(2+)(in) = Ca(2+)(out). With respect to regulation, activated by ATP. pH-dependent and inhibited by acidic pH. ATP-gated nonselective transmembrane cation channel permeable to potassium, sodium and calcium. CTP, but not GTP or UTP, functions as a weak affinity agonist for P2RX4. Activated by extracellularly released ATP, it plays multiple role in immunity and central nervous system physiology. Could also function as an ATP-gated cation channel of lysosomal membranes. The protein is P2X purinoceptor 4a (p2rx4a) of Danio rerio (Zebrafish).